The sequence spans 384 residues: Glucose-fructose oxidoreductase domain-containing protein 2 (384 aa).

The N-terminal stretch at 1 to 25 is a signal peptide; the sequence is MKTLPGIGVFGTGNTARVLISLLRA. Residues 358 to 384 form a disordered region; that stretch reads GEWESVELTNDETDSNQNLSEVIQHNL. Positions 372–384 are enriched in polar residues; that stretch reads SNQNLSEVIQHNL.

The protein belongs to the Gfo/Idh/MocA family.

Its subcellular location is the secreted. It localises to the extracellular space. It is found in the extracellular matrix. Promotes matrix assembly. This chain is Glucose-fructose oxidoreductase domain-containing protein 2 (gfod2), found in Xenopus tropicalis (Western clawed frog).